The chain runs to 889 residues: Oxysterol-binding protein-related protein 8 (889 aa).

M1 carries the post-translational modification N-acetylmethionine. Positions 1 to 129 are disordered; that stretch reads MEGGLADGEP…SLKVQKKNYR (129 aa). Position 14 is a phosphoserine (S14). Composition is skewed to polar residues over residues 28–46 and 62–71; these read VVAN…MSQR and PSLSPASPHS. S65 and S68 each carry phosphoserine. 3 stretches are compositionally biased toward basic and acidic residues: residues 73–88, 95–109, and 116–129; these read GFER…KDES, SKSE…EKDS, and TKKE…KNYR. The 118-residue stretch at 148–265 folds into the PH domain; sequence VIVMADWLKI…WMDALELALK (118 aa). Phosphoserine is present on residues S314, S328, and S342. Positions 322–336 are enriched in basic and acidic residues; sequence KDQDMYSDKSDKEND. The tract at residues 322-399 is disordered; it reads KDQDMYSDKS…AGEASQTETV (78 aa). Positions 346–363 are enriched in basic and acidic residues; that stretch reads VMGKSEESDTDTSERQDD. A 1,2-diacyl-sn-glycero-3-phospho-(1D-myo-inositol 4-phosphate) is bound by residues 420–425, 482–485, and 514–515; these read LSKVVL, KPYN, and HH. Residues 420–425 and N485 each bind a 1,2-diacyl-sn-glycero-3-phospho-L-serine; that span reads LSKVVL. S540 is an a 1,2-diacyl-sn-glycero-3-phospho-L-serine binding site. A 1,2-diacyl-sn-glycero-3-phospho-(1D-myo-inositol 4-phosphate)-binding residues include K706, E710, and R714. The interval 771–823 is disordered; the sequence is KHRTPMVSVPKMKHKPTRQQKKVAKGYSSPEPDIQDSSGSEAQSVKPSTRRKK. Positions 781 to 794 are enriched in basic residues; sequence KMKHKPTRQQKKVA. Positions 805 to 817 are enriched in polar residues; sequence QDSSGSEAQSVKP. Residues S807, S808, S810, and S814 each carry the phosphoserine modification. The chain crosses the membrane as a helical span at residues 871-888; sequence YFIIFLLILLQVIINFMF.

Belongs to the OSBP family. As to quaternary structure, interacts with SPAG5. Interacts with NUP62. Widely expressed. Expressed at higher level in macrophages.

Its subcellular location is the endoplasmic reticulum membrane. It is found in the nucleus membrane. Lipid transporter involved in lipid countertransport between the endoplasmic reticulum and the plasma membrane: specifically exchanges phosphatidylserine with phosphatidylinositol 4-phosphate (PI4P), delivering phosphatidylserine to the plasma membrane in exchange for PI4P, which is degraded by the SAC1/SACM1L phosphatase in the endoplasmic reticulum. Binds phosphatidylserine and PI4P in a mutually exclusive manner. Binds oxysterol, 25-hydroxycholesterol and cholesterol. The protein is Oxysterol-binding protein-related protein 8 (OSBPL8) of Homo sapiens (Human).